Reading from the N-terminus, the 393-residue chain is Envelope glycoprotein D (393 aa).

A signal peptide spans 1–25 (MGRLTSGVGTAALLVVAVGLRVVCA). The interaction with TNFRSF14 stretch occupies residues 25 to 57 (AKYALADPSLKMADPNRFRGKNLPVLDRLTDPP). At 26–339 (KYALADPSLK…HHAPAAPSNP (314 aa)) the chain is on the virion surface side. Zn(2+) is bound at residue His-64. 3 disulfides stabilise this stretch: Cys-91/Cys-214, Cys-131/Cys-227, and Cys-143/Cys-152. N-linked (GlcNAc...) asparagine; by host glycosylation is found at Asn-119 and Asn-146. Asp-240 contacts Zn(2+). A profusion region spans residues 261–305 (LKIAGWHGPKPPYTSTLLPPELSDTTNATQPELVPEDPEDSALLE). Polar residues predominate over residues 274-290 (TSTLLPPELSDTTNATQ). Positions 274–301 (TSTLLPPELSDTTNATQPELVPEDPEDS) are disordered. Residue Asn-287 is glycosylated (N-linked (GlcNAc...) asparagine; by host). The chain crosses the membrane as a helical span at residues 340 to 363 (GLIIGALAGSTLAVLVIGGIAFWV). Topologically, residues 364–393 (RRRAQMAPKRLRLPHIRDDDAPPSHQPLFY) are intravirion.

The protein belongs to the herpesviridae glycoprotein D family. As to quaternary structure, homodimer. Interacts with host receptor TNFRSF14. Interacts with host receptor NECTIN1. Interacts with host receptor NECTIN2. Interacts (via profusion domain) with gB; this interaction occurs in the absence of gH/gL. Interacts (via profusion domain) with gH/gL heterodimer; this interaction occurs in the absence of gB. Associates with the gB-gH/gL-gD complex. Interacts (via C-terminus) with UL11 tegument protein.

Its subcellular location is the virion membrane. Envelope glycoprotein that binds to the host cell entry receptors NECTIN1, NECTIN2 and TNFRSF14/HVEM, promoting the virus entry into host cells. May trigger fusion with host membrane, by recruiting the fusion machinery composed of gB and gH/gL. In Homo sapiens (Human), this protein is Envelope glycoprotein D (gD).